The chain runs to 490 residues: ABC transporter ATP-binding protein ModF (490 aa).

2 consecutive ABC transporter domains span residues 4–235 and 261–489; these read LQIL…AHSE and IVLN…LTKI. Residues 36 to 43 and 293 to 300 each bind ATP; these read GSNGSGKS and GPNGAGKS.

It belongs to the ABC transporter superfamily.

It is found in the cell inner membrane. Probably not involved in the transport of molybdenum into the cell. This Escherichia coli (strain K12) protein is ABC transporter ATP-binding protein ModF (modF).